Here is a 39-residue protein sequence, read N- to C-terminus: Photosystem II reaction center protein I (39 aa).

The helical transmembrane segment at 6–26 threads the bilayer; it reads ISVYSVVFFFIGIFMFGFLAS.

This sequence belongs to the PsbI family. PSII is composed of 1 copy each of membrane proteins PsbA, PsbB, PsbC, PsbD, PsbE, PsbF, PsbH, PsbI, PsbJ, PsbK, PsbL, PsbM, PsbT, PsbX, PsbY, PsbZ, Psb30/Ycf12, peripheral proteins PsbO, CyanoQ (PsbQ), PsbU, PsbV and a large number of cofactors. It forms dimeric complexes.

It is found in the cellular thylakoid membrane. One of the components of the core complex of photosystem II (PSII), required for its stability and/or assembly. PSII is a light-driven water:plastoquinone oxidoreductase that uses light energy to abstract electrons from H(2)O, generating O(2) and a proton gradient subsequently used for ATP formation. It consists of a core antenna complex that captures photons, and an electron transfer chain that converts photonic excitation into a charge separation. In Synechococcus sp. (strain RCC307), this protein is Photosystem II reaction center protein I.